The chain runs to 402 residues: Putative RNA-guided DNA endonuclease InsQ (402 aa).

Active-site residues include aspartate 183 and glutamate 267. 4 residues coordinate Zn(2+): cysteine 334, cysteine 337, cysteine 353, and cysteine 356. Aspartate 363 is an active-site residue.

In the N-terminal section; belongs to the transposase 2 family. This sequence in the C-terminal section; belongs to the transposase 35 family.

An RNA-guided dsDNA endonuclease. When guided by an RNA derived from the right-end element of its insertion sequence element (IS), cleaves DNA downstream of the transposon-associated motif (TAM). Cleaves supercoiled and linear DNA in a staggered manner 15-21 bases from the TAM yielding 5'-overhangs. Binds reRNA, an approximately 150 nucleotide base sRNA derived from the 3' end of its own gene, the right end (RE) of the insertion sequence (IS) plus sequence downstream of the IS. Functionally, not required for transposition of the insertion element. The corresponding transposase in strains MG1655 and W3110 is a truncated pseudogene (yncK). This Escherichia coli (strain K12) protein is Putative RNA-guided DNA endonuclease InsQ (insQ).